A 319-amino-acid polypeptide reads, in one-letter code: Transaldolase (319 aa).

K126 functions as the Schiff-base intermediate with substrate in the catalytic mechanism.

The protein belongs to the transaldolase family. Type 1 subfamily. In terms of assembly, homodimer.

It is found in the cytoplasm. The catalysed reaction is D-sedoheptulose 7-phosphate + D-glyceraldehyde 3-phosphate = D-erythrose 4-phosphate + beta-D-fructose 6-phosphate. It participates in carbohydrate degradation; pentose phosphate pathway; D-glyceraldehyde 3-phosphate and beta-D-fructose 6-phosphate from D-ribose 5-phosphate and D-xylulose 5-phosphate (non-oxidative stage): step 2/3. Functionally, transaldolase is important for the balance of metabolites in the pentose-phosphate pathway. This chain is Transaldolase, found in Bordetella petrii (strain ATCC BAA-461 / DSM 12804 / CCUG 43448).